Reading from the N-terminus, the 337-residue chain is tRNA N6-adenosine threonylcarbamoyltransferase (337 aa).

Fe cation contacts are provided by His-111 and His-115. Residues 134–138, Asp-167, Gly-180, and Asn-272 each bind substrate; that span reads LVSGG. Fe cation is bound at residue Asp-300.

Belongs to the KAE1 / TsaD family. Fe(2+) is required as a cofactor.

The protein localises to the cytoplasm. The catalysed reaction is L-threonylcarbamoyladenylate + adenosine(37) in tRNA = N(6)-L-threonylcarbamoyladenosine(37) in tRNA + AMP + H(+). Required for the formation of a threonylcarbamoyl group on adenosine at position 37 (t(6)A37) in tRNAs that read codons beginning with adenine. Is involved in the transfer of the threonylcarbamoyl moiety of threonylcarbamoyl-AMP (TC-AMP) to the N6 group of A37, together with TsaE and TsaB. TsaD likely plays a direct catalytic role in this reaction. This Shewanella loihica (strain ATCC BAA-1088 / PV-4) protein is tRNA N6-adenosine threonylcarbamoyltransferase.